The chain runs to 486 residues: MVENQKAMPQPEMRRIRRIHFVGIGGVGMCGIAEVLLNLGYEVSGSDLKASPVTERLESFGAQIFIGHRAENAAAADVLVVSSAVNTSNPEVATALERRIPVVPRAEMLAELMRYRHGIAVAGTHGKTTTTSLIASVFAAGGLDPTFVIGGRLNAAGTNAQLGTSRYLIAEADESDASFLHLQPLVAVVTNIDADHMATYDGDFNKLKKTFVEFLHNLPFYGLAVMCLDDPVVREILPLVKRPTVTYGFSEDADVRAINVRQQGMQTFFTVLRPDREPLDVSVNMPGNHNVLNSLATICIATDEGVSDEAIVQGLSGFQGVGRRFQVYGELPVDGGNVMLVDDYGHHPTEVAAVIKAVRGGWPERRLVMVYQPHRYSRTRDLYDDFVNVLADANVLLLMEVYPAGEEPIPGADSRKLCNSIRQRGQLDPIYIERGVDLAPLVKPLLRAGDILLCQGAGDIGGLAPKLLKSELFAGAVAASVEGKLK.

123-129 contacts ATP; the sequence is GTHGKTT.

It belongs to the MurCDEF family.

It localises to the cytoplasm. The catalysed reaction is UDP-N-acetyl-alpha-D-muramate + L-alanine + ATP = UDP-N-acetyl-alpha-D-muramoyl-L-alanine + ADP + phosphate + H(+). It participates in cell wall biogenesis; peptidoglycan biosynthesis. Its function is as follows. Cell wall formation. The sequence is that of UDP-N-acetylmuramate--L-alanine ligase from Pseudomonas fluorescens (strain Pf0-1).